Here is a 185-residue protein sequence, read N- to C-terminus: MLRRGSLRNPLAICLLWWLGVVAAATEETREPTYFTCGCVIQNHVLKGAVKLYGQFPSPKTLRASAWLHDGENHERHRQPILVEGTATATEALYILLPTELSSPEGNRPRNYSATLTLASRDCYERFVCPVYDSGTPMGVLMNLTYLWYLGDYGAILKIYFGLFCGACVITRSLLLICGYYPPRE.

The N-terminal stretch at Met-1–Ala-24 is a signal peptide. At Ala-25–Tyr-149 the chain is on the lumenal side. In terms of domain architecture, Ig-like H-type spans Arg-30–Asp-133. A disulfide bridge connects residues Cys-39 and Cys-129. N-linked (GlcNAc...) asparagine; by host glycans are attached at residues Asn-111 and Asn-143. A helical membrane pass occupies residues Leu-150–Ile-170. Over Thr-171 to Glu-185 the chain is Cytoplasmic.

The protein belongs to the HHV-5 US6 protein family.

The protein localises to the host endoplasmic reticulum membrane. Plays a role in the modulation of host immune response by down-regulating the surface presentation of HLA-G molecules. Selectively targets HLA-G molecules for degradation by a mechanism distinct from the one used by US11. The sequence is that of Membrane glycoprotein US10 (US10) from Human cytomegalovirus (strain Merlin) (HHV-5).